Consider the following 151-residue polypeptide: uncharacterized protein (151 aa).

3 helical membrane-spanning segments follow: residues 14–34 (GAALLDYIIVSVPLLLIYWLI), 45–65 (ISLVVLLYSILLPMFWRGYLI), and 91–111 (VIVAGLVYCITFGLGLIASLI).

The protein localises to the cell membrane. This is an uncharacterized protein from Bacillus subtilis (strain 168).